The sequence spans 334 residues: Probable aminoacyl tRNA synthase complex-interacting multifunctional protein 2 (334 aa).

Residues L280–R327 form the GST C-terminal domain.

As to quaternary structure, component of the aminoacyl-tRNA synthase complex which is comprised of a bifunctional glutamyl-prolyl-tRNA synthase, the monospecific isoleucyl, leucyl, glutaminyl, methionyl, lysyl, arginyl and aspartyl-tRNA synthases, and three auxiliary proteins.

The protein resides in the cytoplasm. It is found in the cytosol. It localises to the nucleus. Required for assembly and stability of the aminoacyl-tRNA synthase complex. This chain is Probable aminoacyl tRNA synthase complex-interacting multifunctional protein 2, found in Drosophila melanogaster (Fruit fly).